Here is a 192-residue protein sequence, read N- to C-terminus: Ribosome maturation factor RimP (192 aa).

Belongs to the RimP family.

It is found in the cytoplasm. Its function is as follows. Required for maturation of 30S ribosomal subunits. This Mycobacterium sp. (strain JLS) protein is Ribosome maturation factor RimP.